Reading from the N-terminus, the 359-residue chain is 3-dehydroquinate synthase (359 aa).

NAD(+) is bound by residues Asp-71–Lys-76, Gly-105–Asp-109, Thr-129–Thr-130, Lys-142, Lys-151, and Cys-169–Thr-172. The Zn(2+) site is built by Glu-184, His-247, and His-264.

It belongs to the sugar phosphate cyclases superfamily. Dehydroquinate synthase family. Co(2+) serves as cofactor. Requires Zn(2+) as cofactor. The cofactor is NAD(+).

It localises to the cytoplasm. It carries out the reaction 7-phospho-2-dehydro-3-deoxy-D-arabino-heptonate = 3-dehydroquinate + phosphate. The protein operates within metabolic intermediate biosynthesis; chorismate biosynthesis; chorismate from D-erythrose 4-phosphate and phosphoenolpyruvate: step 2/7. Functionally, catalyzes the conversion of 3-deoxy-D-arabino-heptulosonate 7-phosphate (DAHP) to dehydroquinate (DHQ). This Shewanella sp. (strain W3-18-1) protein is 3-dehydroquinate synthase.